The chain runs to 100 residues: MAKKSMIQRELKRQKLVMKYATKRAALKEQIKQTTFLKEKLSLHRKLQQLPRNSSAVRLHNRCMITGRPKGYFRDFGLSRHVLREMAHQGLLPGVCKSSW.

The protein belongs to the universal ribosomal protein uS14 family. Part of the 30S ribosomal subunit.

Its subcellular location is the plastid. The protein resides in the chloroplast. Its function is as follows. Binds 16S rRNA, required for the assembly of 30S particles. The polypeptide is Small ribosomal subunit protein uS14c (Chlamydomonas reinhardtii (Chlamydomonas smithii)).